The sequence spans 215 residues: Pyrrolidone-carboxylate peptidase (215 aa).

Active-site residues include Glu80, Cys143, and His167.

This sequence belongs to the peptidase C15 family. In terms of assembly, homotetramer.

The protein localises to the cytoplasm. It catalyses the reaction Release of an N-terminal pyroglutamyl group from a polypeptide, the second amino acid generally not being Pro.. Functionally, removes 5-oxoproline from various penultimate amino acid residues except L-proline. In Bacillus cereus (strain AH820), this protein is Pyrrolidone-carboxylate peptidase.